The chain runs to 263 residues: Endonuclease 8 (263 aa).

Pro2 serves as the catalytic Schiff-base intermediate with DNA. The Proton donor role is filled by Glu3. Lys53 functions as the Proton donor; for beta-elimination activity in the catalytic mechanism. Gln70, Arg125, and Asn169 together coordinate DNA. The segment at 229–263 adopts an FPG-type zinc-finger fold; sequence KVFHRDGEPCERCGSIIEKTTLSSRPFYWCPGCQH. Arg253 acts as the Proton donor; for delta-elimination activity in catalysis.

Belongs to the FPG family. It depends on Zn(2+) as a cofactor.

The enzyme catalyses 2'-deoxyribonucleotide-(2'-deoxyribose 5'-phosphate)-2'-deoxyribonucleotide-DNA = a 3'-end 2'-deoxyribonucleotide-(2,3-dehydro-2,3-deoxyribose 5'-phosphate)-DNA + a 5'-end 5'-phospho-2'-deoxyribonucleoside-DNA + H(+). Functionally, involved in base excision repair of DNA damaged by oxidation or by mutagenic agents. Acts as a DNA glycosylase that recognizes and removes damaged bases. Has a preference for oxidized pyrimidines, such as thymine glycol, 5,6-dihydrouracil and 5,6-dihydrothymine. Has AP (apurinic/apyrimidinic) lyase activity and introduces nicks in the DNA strand. Cleaves the DNA backbone by beta-delta elimination to generate a single-strand break at the site of the removed base with both 3'- and 5'-phosphates. This is Endonuclease 8 from Escherichia coli (strain K12 / MC4100 / BW2952).